We begin with the raw amino-acid sequence, 195 residues long: MGVWGKKHLRLTHAPSPTFSHLPPSPQAGEPGIDGISLAVVCAAFIRIHPARRHPARNGSRLACTPTPRPNAGLEVVSSARVAASLPSEGGWTSGAPRSSGLSLPGSAWQPPPLPVLRKPAWPGSPAVKNESKFPNRGSRNFPRRRLPPAPVSGEPPERCKLAREIRWRLWKAHEGWGGGAKRPLGDPAWSGVKR.

Positions 86 to 158 are disordered; that stretch reads LPSEGGWTSG…PAPVSGEPPE (73 aa).

This is an uncharacterized protein from Homo sapiens (Human).